The sequence spans 84 residues: UPF0512 protein O (84 aa).

Belongs to the UPF0512 family.

This Dictyostelium discoideum (Social amoeba) protein is UPF0512 protein O.